A 327-amino-acid polypeptide reads, in one-letter code: MFNETPVFDYEDIQLIPNKCIINSRSEADTTVTLGKYSFKLPVVPANMQTIIDEDVAEMLAKDGYFYIMHRFDEAGRIPFIKRMHEQGLIASISVGVKEYEYEFVTSLKADAPEFITIDIAHGHAESVIKMIQHIKKELPETFVIAGNVGTPEAVRELENAGADATKVGIGPGKVCITKVKTGFGTGGWQLAALRWCAKAARKPIIADGGIRTHGDIAKSIRFGASMVMIGSLFAGHIESPGKTIEVDGEKFKEYYGSASEYQKGAYKNVEGKKILLPAKGHLKDTLVEMEQDLQSSISYAGGRDITSLKHVDYVIVKNSIWNGDSI.

Catalysis depends on Cys-176, which acts as the Thioimidate intermediate. Residue 205–228 coordinates NADP(+); sequence IIADGGIRTHGDIAKSIRFGASMV.

Belongs to the IMPDH/GMPR family. GuaC type 2 subfamily.

It carries out the reaction IMP + NH4(+) + NADP(+) = GMP + NADPH + 2 H(+). Its function is as follows. Catalyzes the irreversible NADPH-dependent deamination of GMP to IMP. It functions in the conversion of nucleobase, nucleoside and nucleotide derivatives of G to A nucleotides, and in maintaining the intracellular balance of A and G nucleotides. In Streptococcus suis (strain 98HAH33), this protein is GMP reductase.